Here is a 239-residue protein sequence, read N- to C-terminus: Phosducin-like protein 3 (239 aa).

Positions 16 to 37 are disordered; that stretch reads KKGILPPKETPVEEEEDEQLHL. The region spanning 28 to 201 is the Phosducin domain; sequence EEEEDEQLHL…LEWRLSESGA (174 aa). S41 carries the phosphoserine modification. The thioredoxin fold stretch occupies residues 89 to 239; it reads FGELKEISGQ…RDGEEDSDED (151 aa). Polar residues predominate over residues 217–227; it reads QLMTSIRCSAN. The segment at 217 to 239 is disordered; the sequence is QLMTSIRCSANTHRDGEEDSDED.

Belongs to the phosducin family. Interacts (via thioredoxin fold region) with kdr/vegfr2 (via juxtamembrane domain). As to expression, expressed in endothelial cells.

The protein resides in the cytoplasm. The protein localises to the perinuclear region. It localises to the endoplasmic reticulum. Its function is as follows. Acts as a chaperone for the angiogenic VEGF receptor KDR/VEGFR2, increasing its abundance by inhibiting its ubiquitination and degradation. Inhibits the folding activity of the chaperonin-containing T-complex (CCT) which leads to inhibition of cytoskeletal actin folding. Acts as a chaperone during heat shock alongside HSP90 and HSP40/70 chaperone complexes. Modulates the activation of caspases during apoptosis. This is Phosducin-like protein 3 from Danio rerio (Zebrafish).